A 324-amino-acid polypeptide reads, in one-letter code: Stomatin-like protein stl-1 (324 aa).

Belongs to the band 7/mec-2 family. As to expression, widely expressed in most tissues, including body wall muscles, intestinal epithelia, and pharynx and head neurons.

It localises to the mitochondrion. Functionally, mitochondrial protein that probably regulates the biogenesis and the activity of mitochondria. In neurons, involved in mitochondrial fusion and recovery of normal locomotory behavior during reoxygenation; probably acts independently of egl-9 and the canonical hypoxia response pathway. This Caenorhabditis elegans protein is Stomatin-like protein stl-1.